The primary structure comprises 268 residues: Movement protein (268 aa).

The interval 216-238 (KKSDVRKGKNSSSVRSVPNKNYR) is disordered. The segment covering 225-237 (NSSSVRSVPNKNY) has biased composition (polar residues).

It belongs to the tobamovirus movement protein family. In terms of assembly, binds to host RBCS at the plasmodesmata; this interaction seems required for viral systemic movement. In resistant plants, interacts with host MBP2C at host microtubules; this interaction prevents virus cell to cell movement. In resistant plants, interacts with host resistance (R) protein (e.g. tomato ToMV resistance protein TM-2(2), AC Q71BG9) at the host plasma membrane; this interaction triggers host defense responses leading to programmed cell death.

Its subcellular location is the host cytoplasm. The protein resides in the host cytoskeleton. It localises to the host cell junction. It is found in the host plasmodesma. Transports viral genome to neighboring plant cells directly through plasmosdesmata, without any budding. The movement protein allows efficient cell to cell propagation, by bypassing the host cell wall barrier. Forms a ribonucleoprotein complex with viral RNA. Binds microtubules and modulates microtubule stability. Can bind double-stranded DNA. Triggers host hypersensitive defense reaction in incompatible plants harboring resistance (R) proteins. This Nicotiana tabacum (Common tobacco) protein is Movement protein (MP).